A 320-amino-acid polypeptide reads, in one-letter code: MIKKIGVLTSGGDAPGMNAAIRGVVRSALTEGLEVMGIYDGYLGLYEDRMVQLDRYSVSDMINRGGTFLGSARFPEFRDENIRAVAIENLKKRGIDALVVIGGDGSYMGAMRLTEMGFPCIGLPGTIDNDIKGTDYTIGFFTALSTVVEAIDRLRDTSSSHQRISVVEVMGRYCGDLTLAAAIAGGCEFVVVPEVEFSREDLVNEIKAGIAKGKKHAIVAITEHMCDVDELAHFIEKETGRETRATVLGHIQRGGSPVPYDRILASRMGAYAIELLLAGYGGRCVGIQNEQLVHHDIIDAIENMKRPFKGDWLDCAKKLY.

Gly-12 is an ATP binding site. Residues 22–26 (RGVVR) and 55–60 (RYSVSD) each bind ADP. Residues 73-74 (RF) and 103-106 (GDGS) contribute to the ATP site. Residue Asp-104 participates in Mg(2+) binding. 126-128 (TID) serves as a coordination point for substrate. Asp-128 (proton acceptor) is an active-site residue. Residue Arg-155 participates in ADP binding. Substrate is bound by residues Arg-163 and 170-172 (MGR). ADP contacts are provided by residues 186 to 188 (GCE), Lys-212, and 214 to 216 (KKH). Substrate contacts are provided by residues Glu-223, Arg-244, and 250–253 (HIQR).

Belongs to the phosphofructokinase type A (PFKA) family. ATP-dependent PFK group I subfamily. Prokaryotic clade 'B1' sub-subfamily. As to quaternary structure, homotetramer. Mg(2+) is required as a cofactor.

Its subcellular location is the cytoplasm. The enzyme catalyses beta-D-fructose 6-phosphate + ATP = beta-D-fructose 1,6-bisphosphate + ADP + H(+). The protein operates within carbohydrate degradation; glycolysis; D-glyceraldehyde 3-phosphate and glycerone phosphate from D-glucose: step 3/4. Allosterically activated by ADP and other diphosphonucleosides, and allosterically inhibited by phosphoenolpyruvate. Catalyzes the phosphorylation of D-fructose 6-phosphate to fructose 1,6-bisphosphate by ATP, the first committing step of glycolysis. This chain is ATP-dependent 6-phosphofructokinase isozyme 1, found in Escherichia coli O6:H1 (strain CFT073 / ATCC 700928 / UPEC).